A 328-amino-acid chain; its full sequence is D-cysteine desulfhydrase (328 aa).

Lysine 51 is subject to N6-(pyridoxal phosphate)lysine.

Belongs to the ACC deaminase/D-cysteine desulfhydrase family. As to quaternary structure, homodimer. It depends on pyridoxal 5'-phosphate as a cofactor.

The enzyme catalyses D-cysteine + H2O = hydrogen sulfide + pyruvate + NH4(+) + H(+). Its function is as follows. Catalyzes the alpha,beta-elimination reaction of D-cysteine and of several D-cysteine derivatives. It could be a defense mechanism against D-cysteine. This is D-cysteine desulfhydrase from Escherichia coli O7:K1 (strain IAI39 / ExPEC).